The primary structure comprises 266 residues: MAKSLFRALVALSFLAPLWLNAAPRVITLSPANTELAFAAGITPVGVSSYSDYPPQAQKIEQVSTWQGMNLERIVALKPDLVIAWRGGNAERQVDQLASLGIKVMWVDATSIEQIANALRQLAPWSPQPDKAEQAAQSLLDQYVQLKAQYADKPKKRVFLQFGINPPFTSGKESIQNQVLEVCGGENIFKDSRVPWPQVSREQVLARSPQAIVITGGPDQIPKIKQYWGEQLKIPVIPLTSDWFERASPRIILAAQQLCNALSQVD.

Residues 1–22 (MAKSLFRALVALSFLAPLWLNA) form the signal peptide. Residues 25-266 (RVITLSPANT…QLCNALSQVD (242 aa)) form the Fe/B12 periplasmic-binding domain. Cyanocob(III)alamin is bound by residues Y50 and 242-246 (DWFER). C183 and C259 are joined by a disulfide.

It belongs to the BtuF family. As to quaternary structure, the complex is composed of two ATP-binding proteins (BtuD), two transmembrane proteins (BtuC) and a solute-binding protein (BtuF).

It is found in the periplasm. In terms of biological role, part of the ABC transporter complex BtuCDF involved in vitamin B12 import. Binds vitamin B12 and delivers it to the periplasmic surface of BtuC. In Shigella flexneri, this protein is Vitamin B12-binding protein.